The primary structure comprises 476 residues: Argininosuccinate lyase (476 aa).

Positions 1–17 (MTDTGSSDTNTDTTGTS) are enriched in low complexity. The tract at residues 1–22 (MTDTGSSDTNTDTTGTSKANTM) is disordered.

Belongs to the lyase 1 family. Argininosuccinate lyase subfamily.

The protein localises to the cytoplasm. It catalyses the reaction 2-(N(omega)-L-arginino)succinate = fumarate + L-arginine. The protein operates within amino-acid biosynthesis; L-arginine biosynthesis; L-arginine from L-ornithine and carbamoyl phosphate: step 3/3. In Jannaschia sp. (strain CCS1), this protein is Argininosuccinate lyase.